Reading from the N-terminus, the 577-residue chain is 2-succinyl-5-enolpyruvyl-6-hydroxy-3-cyclohexene-1-carboxylate synthase (577 aa).

Belongs to the TPP enzyme family. MenD subfamily. In terms of assembly, homodimer. Mg(2+) is required as a cofactor. The cofactor is Mn(2+). Thiamine diphosphate serves as cofactor.

It carries out the reaction isochorismate + 2-oxoglutarate + H(+) = 5-enolpyruvoyl-6-hydroxy-2-succinyl-cyclohex-3-ene-1-carboxylate + CO2. The protein operates within quinol/quinone metabolism; 1,4-dihydroxy-2-naphthoate biosynthesis; 1,4-dihydroxy-2-naphthoate from chorismate: step 2/7. It functions in the pathway cofactor biosynthesis; phylloquinone biosynthesis. Functionally, catalyzes the thiamine diphosphate-dependent decarboxylation of 2-oxoglutarate and the subsequent addition of the resulting succinic semialdehyde-thiamine pyrophosphate anion to isochorismate to yield 2-succinyl-5-enolpyruvyl-6-hydroxy-3-cyclohexene-1-carboxylate (SEPHCHC). The sequence is that of 2-succinyl-5-enolpyruvyl-6-hydroxy-3-cyclohexene-1-carboxylate synthase from Synechococcus sp. (strain CC9311).